The primary structure comprises 322 residues: Protein mono-ADP-ribosyltransferase PARP16 (322 aa).

Residues 1–287 (MQLSNRAAAR…RASSQLSWLS (287 aa)) lie on the Cytoplasmic side of the membrane. Residues 5–91 (NRAAAREAAS…AWDLVSWILS (87 aa)) form the PARP alpha-helical domain. A PARP catalytic domain is found at 94-279 (ILTIHSAKKA…VYSQKQPKRA (186 aa)). The NAD(+) site is built by H152, Y182, and Y254. Residues 288-308 (SHWFVIMMSLYLLLLLIVSVT) traverse the membrane as a helical segment. At 309–322 (NSSVFHHFWNRVKR) the chain is on the lumenal side.

The protein belongs to the ARTD/PARP family. Interacts with KPNB1. Post-translationally, auto-mono-ADP-ribosylated.

Its subcellular location is the endoplasmic reticulum membrane. It catalyses the reaction L-aspartyl-[protein] + NAD(+) = 4-O-(ADP-D-ribosyl)-L-aspartyl-[protein] + nicotinamide. The catalysed reaction is L-lysyl-[protein] + NAD(+) = N(6)-(ADP-D-ribosyl)-L-lysyl-[protein] + nicotinamide + H(+). It carries out the reaction L-glutamyl-[protein] + NAD(+) = 5-O-(ADP-D-ribosyl)-L-glutamyl-[protein] + nicotinamide. Its activity is regulated as follows. In absence of activation signal, PARP16 is autoinhibited by the PARP alpha-helical domain (also named HD region), which prevents effective NAD(+)-binding. Activity is highly stimulated by signals, which unfold the PARP alpha-helical domain, relieving autoinhibition. Its function is as follows. Intracellular mono-ADP-ribosyltransferase that plays a role in different processes, such as protein translation and unfolded protein response (UPR), through the mono-ADP-ribosylation of proteins involved in those processes. Acts as an inhibitor of protein translation by catalyzing mono-ADP-ribosylation of ribosomal subunits, such as RPL14 and RPS6, thereby inhibiting polysome assembly and mRNA loading. Mono-ADP-ribosylation of ribosomal subunits is promoted by NMNAT2. Involved in the unfolded protein response (UPR) by ADP-ribosylating and activating EIF2AK3 and ERN1, two important UPR effectors. May also mediate mono-ADP-ribosylation of karyopherin KPNB1 a nuclear import factor. May not modify proteins on arginine or cysteine residues compared to other mono-ADP-ribosyltransferases. In Mus musculus (Mouse), this protein is Protein mono-ADP-ribosyltransferase PARP16.